The chain runs to 196 residues: Cilia- and flagella-associated protein 107 (196 aa).

Mn stretches follow at residues threonine 46–histidine 61 and isoleucine 96–tyrosine 108. Residues tyrosine 168–phenylalanine 196 form a disordered region. Residues proline 184–phenylalanine 196 are compositionally biased toward pro residues.

Microtubule inner protein component of sperm flagellar doublet microtubules. In terms of tissue distribution, expressed in trachea multiciliated cells.

It is found in the cytoplasm. The protein localises to the cytoskeleton. It localises to the cilium axoneme. The protein resides in the flagellum axoneme. Functionally, microtubule inner protein (MIP) part of the dynein-decorated doublet microtubules (DMTs) in cilia axoneme, which is required for motile cilia beating. In Bos taurus (Bovine), this protein is Cilia- and flagella-associated protein 107.